A 155-amino-acid chain; its full sequence is 2-C-methyl-D-erythritol 2,4-cyclodiphosphate synthase (155 aa).

2 residues coordinate a divalent metal cation: aspartate 8 and histidine 10. 4-CDP-2-C-methyl-D-erythritol 2-phosphate is bound by residues 8 to 10 (DVH) and 34 to 35 (HS). Histidine 42 provides a ligand contact to a divalent metal cation. Residues 56 to 58 (DIG), 61 to 65 (FPDSD), 100 to 106 (AQKPKML), 132 to 135 (TTEE), phenylalanine 139, and lysine 142 contribute to the 4-CDP-2-C-methyl-D-erythritol 2-phosphate site.

It belongs to the IspF family. Homotrimer. A divalent metal cation is required as a cofactor.

The enzyme catalyses 4-CDP-2-C-methyl-D-erythritol 2-phosphate = 2-C-methyl-D-erythritol 2,4-cyclic diphosphate + CMP. It participates in isoprenoid biosynthesis; isopentenyl diphosphate biosynthesis via DXP pathway; isopentenyl diphosphate from 1-deoxy-D-xylulose 5-phosphate: step 4/6. Functionally, involved in the biosynthesis of isopentenyl diphosphate (IPP) and dimethylallyl diphosphate (DMAPP), two major building blocks of isoprenoid compounds. Catalyzes the conversion of 4-diphosphocytidyl-2-C-methyl-D-erythritol 2-phosphate (CDP-ME2P) to 2-C-methyl-D-erythritol 2,4-cyclodiphosphate (ME-CPP) with a corresponding release of cytidine 5-monophosphate (CMP). In Clostridium botulinum (strain 657 / Type Ba4), this protein is 2-C-methyl-D-erythritol 2,4-cyclodiphosphate synthase.